A 505-amino-acid chain; its full sequence is NADH-quinone oxidoreductase subunit N (505 aa).

14 helical membrane-spanning segments follow: residues 20–40, 59–79, 83–103, 115–135, 137–157, 172–192, 220–240, 251–271, 285–305, 314–334, 342–362, 394–414, 431–451, and 481–501; these read ALAP…GDLF, ALAL…GGVF, GLAA…ALMS, GEYY…VSAG, AIVL…LVAL, FLMG…LYGL, AVVA…TVPF, APTT…FAVL, LWSD…NIAA, MLAY…AACT, AAYL…IIYL, LAAV…TAGF, ITVV…LGVA, and AVCL…LFWI.

Belongs to the complex I subunit 2 family. In terms of assembly, NDH-1 is composed of 14 different subunits. Subunits NuoA, H, J, K, L, M, N constitute the membrane sector of the complex.

It is found in the cell inner membrane. It catalyses the reaction a quinone + NADH + 5 H(+)(in) = a quinol + NAD(+) + 4 H(+)(out). NDH-1 shuttles electrons from NADH, via FMN and iron-sulfur (Fe-S) centers, to quinones in the respiratory chain. The immediate electron acceptor for the enzyme in this species is believed to be ubiquinone. Couples the redox reaction to proton translocation (for every two electrons transferred, four hydrogen ions are translocated across the cytoplasmic membrane), and thus conserves the redox energy in a proton gradient. The protein is NADH-quinone oxidoreductase subunit N of Desulfovibrio desulfuricans (strain ATCC 27774 / DSM 6949 / MB).